The following is a 418-amino-acid chain: Gamma-glutamyl phosphate reductase (418 aa).

This sequence belongs to the gamma-glutamyl phosphate reductase family.

Its subcellular location is the cytoplasm. It catalyses the reaction L-glutamate 5-semialdehyde + phosphate + NADP(+) = L-glutamyl 5-phosphate + NADPH + H(+). It functions in the pathway amino-acid biosynthesis; L-proline biosynthesis; L-glutamate 5-semialdehyde from L-glutamate: step 2/2. Its function is as follows. Catalyzes the NADPH-dependent reduction of L-glutamate 5-phosphate into L-glutamate 5-semialdehyde and phosphate. The product spontaneously undergoes cyclization to form 1-pyrroline-5-carboxylate. The chain is Gamma-glutamyl phosphate reductase from Desulforapulum autotrophicum (strain ATCC 43914 / DSM 3382 / VKM B-1955 / HRM2) (Desulfobacterium autotrophicum).